We begin with the raw amino-acid sequence, 177 residues long: F(420)H(2) dehydrogenase subunit I (177 aa).

Residues 1-21 (MGCPEVQDRPGSGYELEETPA) form a disordered region. 4Fe-4S ferredoxin-type domains follow at residues 76–105 (GLQT…IVKA) and 116–145 (WFPQ…SGKE). [4Fe-4S] cluster-binding residues include C85, C88, C91, C95, C125, C128, C131, and C135.

The protein belongs to the complex I 23 kDa subunit family. As to quaternary structure, the FPO complex is composed of at least 13 different subunits. [4Fe-4S] cluster is required as a cofactor.

It carries out the reaction methanophenazine + reduced coenzyme F420-(gamma-L-Glu)(n) = dihydromethanophenazine + oxidized coenzyme F420-(gamma-L-Glu)(n) + H(+). Component of the F(420)H(2) dehydrogenase (FPO complex) which is part of the energy-conserving F(420)H(2):heterodisulfide oxidoreductase system. The membrane-bound electron transfer system of the complex plays an important role in the metabolism of methylotrophic methanogens when the organisms grow on methanol or methylamines. Catalyzes the oxidation of methanophenazine to dihydromethanophenazine. It shuttles electrons from F(420)H(2), via FAD and iron-sulfur (Fe-S) centers, to methanophenazine (an electron carrier in the membrane). It couples the redox reaction to proton translocation (for every two electrons transferred, two hydrogen ions are translocated across the cytoplasmic membrane), and thus conserves the redox energy in a proton gradient. It also catalyzes the oxidation of F(420)H(2) with quinones such as 2,3-dimethyl-1,4-naphthoquinone, 2-methyl-1,4-naphthoquinone and tetramethyl-p-benzoquinone. This Methanosarcina mazei (strain ATCC BAA-159 / DSM 3647 / Goe1 / Go1 / JCM 11833 / OCM 88) (Methanosarcina frisia) protein is F(420)H(2) dehydrogenase subunit I (fpoI).